We begin with the raw amino-acid sequence, 440 residues long: Protein disulfide-isomerase A6 homolog (440 aa).

The signal sequence occupies residues 1-18 (MALIKLLLASLAITSVCG). Thioredoxin domains are found at residues 19-131 (MYSK…AEAK) and 127-273 (LAEA…ARAQ). Catalysis depends on nucleophile residues Cys54 and Cys57. The cysteines at positions 54 and 57 are disulfide-linked. The disordered stretch occupies residues 138–164 (LGGKSSGSSSSGSGSGSGKRGGGGSGN). Residues 139-149 (GGKSSGSSSSG) are compositionally biased toward low complexity. A compositionally biased stretch (gly residues) spans 150 to 163 (SGSGSGKRGGGGSG). Residues Cys194 and Cys197 each act as nucleophile in the active site. Cys194 and Cys197 are oxidised to a cystine. Residues 404 to 426 (DGFPKIQKTEKWDGKDGALPAED) form a disordered region. Residues 410 to 419 (QKTEKWDGKD) are compositionally biased toward basic and acidic residues. The Prevents secretion from ER signature appears at 437 to 440 (KTEL).

The protein belongs to the protein disulfide isomerase family.

The protein resides in the endoplasmic reticulum lumen. It catalyses the reaction Catalyzes the rearrangement of -S-S- bonds in proteins.. Functionally, may function as a chaperone that inhibits aggregation of misfolded proteins. May negatively regulate the unfolded protein response (UPR) through binding to UPR sensors. In Caenorhabditis elegans, this protein is Protein disulfide-isomerase A6 homolog.